A 494-amino-acid chain; its full sequence is Cytochrome P450 monooxygenase acrF (494 aa).

Cys420 serves as a coordination point for heme.

It belongs to the cytochrome P450 family. It depends on heme as a cofactor.

It functions in the pathway secondary metabolite biosynthesis. Functionally, cytochrome P450 monooxygenase; part of the cluster that mediates the biosynthesis of acurin A, a highly reduced polyketide coupled to a serine via a peptide bond. The activities of the highly reducing polyketide synthase acrA and the nonribosomal peptide synthetase acrB are collectively responsible for the synthesis of the acurin A core structure with a heptaketide backbone produced by acrA covalently fused to a L-serine by acrB. After the formation of the PK-NRP hybrid product, it is detached from acrB by reductive release to set up the formation of the lactam ring by aldol condensation. The hydrolyase acrC then catalyzes water loss to generate a double bond in the ring. This double bond is probably reduced, which is followed by three oxidations at C-22 to generate the carboxylic acid moiety, involving probably the FAD-binding monooxygenase acrE and the cytochrome P450 monooxygenases acrD and acrF. Finally, a last methylation step performed by the O-methyltransferase acrG leads to the production of acurin A. In Aspergillus aculeatus (strain ATCC 16872 / CBS 172.66 / WB 5094), this protein is Cytochrome P450 monooxygenase acrF.